The sequence spans 237 residues: Class B acid phosphatase (237 aa).

Residues 1-23 (MKKITLALSAVCLLFTLNHSANA) form the signal peptide. The active-site Nucleophile is Asp69. Asp69 and Asp71 together coordinate Mg(2+). Catalysis depends on Asp71, which acts as the Proton donor. Substrate is bound by residues 137-138 (TG) and Lys177. Asp192 contacts Mg(2+).

Belongs to the class B bacterial acid phosphatase family. Homotetramer. Mg(2+) is required as a cofactor.

It is found in the periplasm. The catalysed reaction is a phosphate monoester + H2O = an alcohol + phosphate. Its activity is regulated as follows. Nucleosides, and particularly 2'-deoxyribonucleosides, are potent inhibitors of the phosphatase activity. The phosphatase activity is also inhibited by inorganic phosphate and EDTA in vitro. Its function is as follows. Dephosphorylates several organic phosphate monoesters such as 3'-UMP, 5'-UMP and pNPP. Also has a phosphotransferase activity catalyzing the transfer of low-energy phosphate groups from organic phosphate monoesters to free hydroxyl groups of various organic compounds such as the 2'-, 3-, or 5'-hydroxyls of nucleosides and nucleotides. Also displays significant phosphomutase activity since it is able to catalyze the transfer of the phosphate group of 3'-AMP from the 3'-position both to the 2'- and 5'-positions. One of the physiological functions of the phosphohydrolytic activity of the enzyme is believed to be the scavenging of organic phosphate esters that otherwise cannot pass the cytoplasmic membrane. This is Class B acid phosphatase (aphA) from Salmonella typhimurium (strain LT2 / SGSC1412 / ATCC 700720).